We begin with the raw amino-acid sequence, 546 residues long: Chaperonin GroEL 1 (546 aa).

ATP is bound by residues 30–33 (TLGP), Lys51, 87–91 (DGTTT), Gly415, 479–481 (NAA), and Asp495.

Belongs to the chaperonin (HSP60) family. As to quaternary structure, forms a cylinder of 14 subunits composed of two heptameric rings stacked back-to-back. Interacts with the co-chaperonin GroES.

Its subcellular location is the cytoplasm. It carries out the reaction ATP + H2O + a folded polypeptide = ADP + phosphate + an unfolded polypeptide.. Together with its co-chaperonin GroES, plays an essential role in assisting protein folding. The GroEL-GroES system forms a nano-cage that allows encapsulation of the non-native substrate proteins and provides a physical environment optimized to promote and accelerate protein folding. The polypeptide is Chaperonin GroEL 1 (Paraburkholderia xenovorans (strain LB400)).